The chain runs to 113 residues: Ubiquinol-cytochrome-c reductase complex assembly factor 4 (113 aa).

The first 18 residues, 1–18, serve as a signal peptide directing secretion; it reads MWGSLCKAPLLRLRPTFA. The Mitochondrial matrix segment spans residues 19–72; sequence AVSNVKTIHIKASPDYNEGIDKSKPLKFSTSKASHRHWTVAKSLGSNQQRPWWK. The helical transmembrane segment at 73–89 threads the bilayer; sequence VVPLSVFLTTVLLWAIF. At 90–113 the chain is on the mitochondrial intermembrane side; the sequence is RKETDIDEAIYKPIEQLQDESENK.

The protein belongs to the UQCC4 family.

The protein resides in the mitochondrion inner membrane. Its function is as follows. Required for the assembly and stability of the mitochondrial ubiquinol-cytochrome c reductase complex (complex III (CIII) or cytochrome b-c1 complex), a multisubunit transmembrane complex that is part of the mitochondrial electron transport chain (ETC) which drives oxidative phosphorylation. The polypeptide is Ubiquinol-cytochrome-c reductase complex assembly factor 4 (uqcc4) (Xenopus tropicalis (Western clawed frog)).